The following is a 129-amino-acid chain: UPF0325 protein PC1_0937 (129 aa).

This sequence belongs to the UPF0325 family.

The polypeptide is UPF0325 protein PC1_0937 (Pectobacterium carotovorum subsp. carotovorum (strain PC1)).